We begin with the raw amino-acid sequence, 222 residues long: Putative RING finger protein ORF118 (222 aa).

The RING-type zinc-finger motif lies at Cys-78–Asn-114. Residues Ile-184–Ile-222 form a disordered region. Residues His-189 to Glu-198 are compositionally biased toward low complexity. Positions Pro-209–Ile-222 are enriched in basic residues.

In Magallana gigas (Pacific oyster), this protein is Putative RING finger protein ORF118.